The chain runs to 64 residues: Large ribosomal subunit protein bL32 (64 aa).

The disordered stretch occupies residues 1-36 (MAVQKSRVTPSRRGQRRSHDALSAKQLSTDPTTGEV).

The protein belongs to the bacterial ribosomal protein bL32 family.

This chain is Large ribosomal subunit protein bL32, found in Stenotrophomonas maltophilia (strain K279a).